The sequence spans 448 residues: Probable ribonuclease FAU-1 (448 aa).

It belongs to the FAU-1 family.

Probable RNase involved in rRNA stability through maturation and/or degradation of precursor rRNAs. Binds to RNA in loop regions with AU-rich sequences. The polypeptide is Probable ribonuclease FAU-1 (Pyrobaculum calidifontis (strain DSM 21063 / JCM 11548 / VA1)).